Consider the following 146-residue polypeptide: Large ribosomal subunit protein uL15 (146 aa).

Positions 1 to 51 are disordered; the sequence is MKLHELQPAAGSRKVRNRVGRGTSSGNGKTSGRGQKGQKARSGGGVRLGFE. Gly residues-rich tracts occupy residues 23-35 and 42-51; these read TSSG…GRGQ and SGGGVRLGFE.

Belongs to the universal ribosomal protein uL15 family. Part of the 50S ribosomal subunit.

Its function is as follows. Binds to the 23S rRNA. This is Large ribosomal subunit protein uL15 from Streptococcus sanguinis (strain SK36).